The primary structure comprises 510 residues: Hepatic triacylglycerol lipase (510 aa).

The first 21 residues, Met-1–Ala-21, serve as a signal peptide directing secretion. Residue Asn-79 is glycosylated (N-linked (GlcNAc...) asparagine). Ser-169 serves as the catalytic Nucleophile. Catalysis depends on Asp-195, which acts as the Charge relay system. Residues Cys-255–Cys-278 form an essential for determining substrate specificity region. His-280 functions as the Charge relay system in the catalytic mechanism. The 135-residue stretch at Tyr-353–Asn-487 folds into the PLAT domain. Asn-398 carries an N-linked (GlcNAc...) asparagine glycan.

This sequence belongs to the AB hydrolase superfamily. Lipase family. Homodimer.

The protein localises to the secreted. It catalyses the reaction a triacylglycerol + H2O = a diacylglycerol + a fatty acid + H(+). It carries out the reaction a 1-acyl-sn-glycero-3-phosphocholine + H2O = sn-glycerol 3-phosphocholine + a fatty acid + H(+). The catalysed reaction is a 1,2-diacyl-sn-glycero-3-phosphocholine + H2O = a 2-acyl-sn-glycero-3-phosphocholine + a fatty acid + H(+). The enzyme catalyses 1,2,3-tri-(9Z-octadecenoyl)-glycerol + H2O = di-(9Z)-octadecenoylglycerol + (9Z)-octadecenoate + H(+). It catalyses the reaction 1,2-di-(9Z-octadecenoyl)-sn-glycero-3-phosphocholine + H2O = (9Z-octadecenoyl)-sn-glycero-3-phosphocholine + (9Z)-octadecenoate + H(+). It carries out the reaction 1,2,3-tributanoylglycerol + H2O = dibutanoylglycerol + butanoate + H(+). The catalysed reaction is 1,2-dihexadecanoyl-sn-glycero-3-phosphocholine + H2O = hexadecanoyl-sn-glycero-3-phosphocholine + hexadecanoate + H(+). The enzyme catalyses 1,2-di-(9Z-octadecenoyl)-sn-glycerol + H2O = 2-(9Z-octadecenoyl)-glycerol + (9Z)-octadecenoate + H(+). It catalyses the reaction 1,2,3-tri-(9Z-octadecenoyl)-glycerol + H2O = 2,3-di-(9Z)-octadecenoyl-sn-glycerol + (9Z)-octadecenoate + H(+). It carries out the reaction 1-(9Z-octadecenoyl)-sn-glycero-3-phospho-L-serine + H2O = sn-glycero-3-phospho-L-serine + (9Z)-octadecenoate + H(+). The catalysed reaction is 1-hexadecanoyl-sn-glycero-3-phosphocholine + H2O = sn-glycerol 3-phosphocholine + hexadecanoate + H(+). The enzyme catalyses 1,3-di-(9Z-octadecenoyl)-glycerol + H2O = 3-(9Z-octadecenoyl)-sn-glycerol + (9Z)-octadecenoate + H(+). Its function is as follows. Catalyzes the hydrolysis of triglycerides and phospholipids present in circulating plasma lipoproteins, including chylomicrons, intermediate density lipoproteins (IDL), low density lipoproteins (LDL) of large size and high density lipoproteins (HDL), releasing free fatty acids (FFA) and smaller lipoprotein particles. Also exhibits lysophospholipase activity. Can hydrolyze both neutral lipid and phospholipid substrates but shows a greater binding affinity for neutral lipid substrates than phospholipid substrates. In native LDL, preferentially hydrolyzes the phosphatidylcholine species containing polyunsaturated fatty acids at sn-2 position. This chain is Hepatic triacylglycerol lipase (Lipc), found in Mus musculus (Mouse).